A 247-amino-acid chain; its full sequence is ATP synthase subunit a, chloroplastic (247 aa).

Helical transmembrane passes span 38-58 (QVLI…TLAV), 95-115 (VPFI…GALL), 134-154 (INTT…AGLT), 199-219 (LVVV…VMFL), and 220-240 (GLFT…AYIG).

Belongs to the ATPase A chain family. As to quaternary structure, F-type ATPases have 2 components, CF(1) - the catalytic core - and CF(0) - the membrane proton channel. CF(1) has five subunits: alpha(3), beta(3), gamma(1), delta(1), epsilon(1). CF(0) has four main subunits: a, b, b' and c.

The protein localises to the plastid. The protein resides in the chloroplast thylakoid membrane. Its function is as follows. Key component of the proton channel; it plays a direct role in the translocation of protons across the membrane. In Vitis vinifera (Grape), this protein is ATP synthase subunit a, chloroplastic.